Consider the following 279-residue polypeptide: uncharacterized protein (279 aa).

One can recognise a Reverse transcriptase domain in the interval Met-1–Ile-87.

This is an uncharacterized protein from Caenorhabditis elegans.